Reading from the N-terminus, the 64-residue chain is Large ribosomal subunit protein bL35 (64 aa).

2 disordered regions span residues 1–22 and 34–64; these read MPKAKTHSGASKRFRRTGTGKI and EHKPTTRTRRLEGRTTVSANDTKRVNSLLNG. Over residues 34–46 the composition is skewed to basic and acidic residues; sequence EHKPTTRTRRLEG. The span at 50-64 shows a compositional bias: polar residues; that stretch reads VSANDTKRVNSLLNG.

Belongs to the bacterial ribosomal protein bL35 family.

The protein is Large ribosomal subunit protein bL35 of Mycolicibacterium paratuberculosis (strain ATCC BAA-968 / K-10) (Mycobacterium paratuberculosis).